The sequence spans 2631 residues: Cyclic GMP-binding protein C (2631 aa).

LRR repeat units lie at residues 170–194 (TAQI…IFSL), 196–217 (WIQK…IGKL), 218–240 (QQLQ…IGDL), 242–262 (NLKR…LERL), 263–285 (SKLE…IASL), and 287–308 (SLKT…VVSK). The Roc domain maps to 323–515 (GARPCLRSKL…QLIEDIIKTQ (193 aa)). GTP-binding positions include 336-343 (GDPGVGKT), 402-406 (DIANQ), and 458-461 (THID). Residues 523 to 741 (PSSFFTLEEA…ESCQKRAVIL (219 aa)) form the COR domain. The Protein kinase domain maps to 878-1172 (VKINKEVGRG…KKKFAPLPFT (295 aa)). ATP is bound by residues 884 to 892 (VGRGAFGIV) and Lys-905. The active-site Proton acceptor is Asp-1023. The segment covering 1225 to 1250 (ISLTSSGTSPTNSPVGGLLSQSLTQP) has biased composition (polar residues). 2 disordered regions span residues 1225-1263 (ISLT…ILST) and 1387-1418 (SSAT…RNSV). Positions 1251–1263 (ITSGGSTSGILST) are enriched in low complexity. In terms of domain architecture, N-terminal Ras-GEF spans 1366 to 1539 (SVSIIIAATM…QIYGTLTTHE (174 aa)). Over residues 1392 to 1404 (KSEHISTRRRSDT) the composition is skewed to basic and acidic residues. One can recognise a DEP domain in the interval 1620–1706 (PLLGITVKEK…SPTSFYMFLE (87 aa)). The Ras-GEF domain occupies 1708-1971 (DPELIARQYT…DLKALDSLQI (264 aa)). The tract at residues 1989-2013 (GTTNDDKEKGDENGGGLTSSNFFGN) is disordered. 2014 to 2133 (GSDELTERDW…AKFYKIMANQ (120 aa)) lines the a nucleoside 3',5'-cyclic phosphate pocket. 3 disordered regions span residues 2142–2180 (PWSK…GGGL), 2192–2239 (MSLS…TTTD), and 2263–2346 (SANL…GQQP). Over residues 2144 to 2174 (SKPKNTTGGSSSSNQSAGPDNILGTTPTGIS) the composition is skewed to low complexity. A compositionally biased stretch (pro residues) spans 2212–2221 (LPSPPAPLQS). Residues 2222 to 2238 (PPTSGISSPTTTTSTTT) show a composition bias toward low complexity. A compositionally biased stretch (basic and acidic residues) spans 2287-2299 (TINKDPHQRDSGS). Residues 2321–2336 (GSISYLGRTQTSTSPL) show a composition bias toward polar residues. Residues 2354-2414 (EFCQRFALVD…KNIDKLICIN (61 aa)) form the GRAM domain. 2490-2616 (GDELTKEDWE…ASKWFKYLAT (127 aa)) contacts a nucleoside 3',5'-cyclic phosphate.

This sequence belongs to the protein kinase superfamily. TKL Ser/Thr protein kinase family. ROCO subfamily.

It catalyses the reaction L-seryl-[protein] + ATP = O-phospho-L-seryl-[protein] + ADP + H(+). The enzyme catalyses L-threonyl-[protein] + ATP = O-phospho-L-threonyl-[protein] + ADP + H(+). Promotes the exchange of Ras-bound GDP by GTP. Required for cyclic GMP-mediated chemotaxis, polarity. Plays a key role in cyclic AMP-induced myosin II translocation to the cortex. Also involved in the phosphorylation of mlkA and mlcR, either directly or via an intermediate kinase. This Dictyostelium discoideum (Social amoeba) protein is Cyclic GMP-binding protein C (gbpC).